Reading from the N-terminus, the 408-residue chain is Serine/threonine transporter SstT (408 aa).

9 helical membrane-spanning segments follow: residues 11-31, 43-63, 82-102, 141-161, 192-212, 216-236, 298-318, 339-359, and 363-383; these read LANG…VSLA, FLGS…VFIL, IVVL…LLSM, ALMT…GLAL, IGIF…AIAG, LLAV…PLIV, MGGA…TLGI, ASGV…LFGI, and VAMQ…AAET.

This sequence belongs to the dicarboxylate/amino acid:cation symporter (DAACS) (TC 2.A.23) family.

It is found in the cell inner membrane. The enzyme catalyses L-serine(in) + Na(+)(in) = L-serine(out) + Na(+)(out). It carries out the reaction L-threonine(in) + Na(+)(in) = L-threonine(out) + Na(+)(out). Its function is as follows. Involved in the import of serine and threonine into the cell, with the concomitant import of sodium (symport system). The protein is Serine/threonine transporter SstT of Shewanella sp. (strain MR-7).